Here is a 331-residue protein sequence, read N- to C-terminus: Small ribosomal subunit protein uS2 (331 aa).

It belongs to the universal ribosomal protein uS2 family.

This Rhodopseudomonas palustris (strain HaA2) protein is Small ribosomal subunit protein uS2.